The primary structure comprises 647 residues: DNA mismatch repair protein MutL (647 aa).

This sequence belongs to the DNA mismatch repair MutL/HexB family.

In terms of biological role, this protein is involved in the repair of mismatches in DNA. It is required for dam-dependent methyl-directed DNA mismatch repair. May act as a 'molecular matchmaker', a protein that promotes the formation of a stable complex between two or more DNA-binding proteins in an ATP-dependent manner without itself being part of a final effector complex. This Bacillus cereus (strain Q1) protein is DNA mismatch repair protein MutL.